The following is a 148-amino-acid chain: Lysozyme-like protein 2 (148 aa).

The signal sequence occupies residues 1 to 19 (MKAAGILTLIGCLVTGAES). A C-type lysozyme domain is found at 20 to 148 (KIYTRCKLAK…SDWKKDCEVS (129 aa)). 4 cysteine pairs are disulfide-bonded: Cys-25–Cys-145, Cys-49–Cys-133, Cys-83–Cys-98, and Cys-94–Cys-112. Glu-54 is a catalytic residue. N-linked (GlcNAc...) asparagine glycosylation occurs at Asn-58. Asp-71 is an active-site residue.

Belongs to the glycosyl hydrolase 22 family. Monomer. As to expression, expressed in testis, epididymis and placenta.

The protein resides in the secreted. It catalyses the reaction Hydrolysis of (1-&gt;4)-beta-linkages between N-acetylmuramic acid and N-acetyl-D-glucosamine residues in a peptidoglycan and between N-acetyl-D-glucosamine residues in chitodextrins.. The chain is Lysozyme-like protein 2 (LYZL2) from Homo sapiens (Human).